We begin with the raw amino-acid sequence, 175 residues long: Cell division protein SepF (175 aa).

Over residues 20–29 (RYEDYDDYDD) the composition is skewed to acidic residues. The interval 20 to 88 (RYEDYDDYDD…ERPTPPLRVT (69 aa)) is disordered. Basic and acidic residues-rich tracts occupy residues 30–47 (AEPHRREPREAVERDLGS) and 54–73 (RRMDARESSPADPAELRRVS).

This sequence belongs to the SepF family. As to quaternary structure, homodimer. Interacts with FtsZ.

Its subcellular location is the cytoplasm. In terms of biological role, cell division protein that is part of the divisome complex and is recruited early to the Z-ring. Probably stimulates Z-ring formation, perhaps through the cross-linking of FtsZ protofilaments. Its function overlaps with FtsA. In Acidothermus cellulolyticus (strain ATCC 43068 / DSM 8971 / 11B), this protein is Cell division protein SepF.